Reading from the N-terminus, the 243-residue chain is Geranylgeranylglyceryl phosphate synthase (243 aa).

Mg(2+)-binding residues include Asp-22 and Ser-51. Sn-glycerol 1-phosphate is bound by residues 170 to 176 (YLESGSG), 201 to 202 (GG), and 223 to 224 (GT).

It belongs to the GGGP/HepGP synthase family. Group II subfamily. Mg(2+) serves as cofactor.

It localises to the cytoplasm. It catalyses the reaction sn-glycerol 1-phosphate + (2E,6E,10E)-geranylgeranyl diphosphate = sn-3-O-(geranylgeranyl)glycerol 1-phosphate + diphosphate. It participates in membrane lipid metabolism; glycerophospholipid metabolism. In terms of biological role, prenyltransferase that catalyzes the transfer of the geranylgeranyl moiety of geranylgeranyl diphosphate (GGPP) to the C3 hydroxyl of sn-glycerol-1-phosphate (G1P). This reaction is the first ether-bond-formation step in the biosynthesis of archaeal membrane lipids. This is Geranylgeranylglyceryl phosphate synthase from Picrophilus torridus (strain ATCC 700027 / DSM 9790 / JCM 10055 / NBRC 100828 / KAW 2/3).